Here is a 137-residue protein sequence, read N- to C-terminus: Small ribosomal subunit protein bS6 (137 aa).

The disordered stretch occupies residues 96–137 (ITEASPMAKAKDERDTRRSSEERAPRAEATEEAEESAENTAE). The segment covering 104–124 (KAKDERDTRRSSEERAPRAEA) has biased composition (basic and acidic residues). A compositionally biased stretch (acidic residues) spans 125 to 137 (TEEAEESAENTAE).

Belongs to the bacterial ribosomal protein bS6 family.

Its function is as follows. Binds together with bS18 to 16S ribosomal RNA. The polypeptide is Small ribosomal subunit protein bS6 (Shewanella pealeana (strain ATCC 700345 / ANG-SQ1)).